Reading from the N-terminus, the 187-residue chain is Epididymal-specific lipocalin-10 (187 aa).

Residues 1-19 (MRQGLLVLALVLVLVLVLA) form the signal peptide. Cys-90 and Cys-163 are disulfide-bonded. The N-linked (GlcNAc...) asparagine glycan is linked to Asn-149. Lys-170 bears the N6-acetyllysine mark.

The protein belongs to the calycin superfamily. Lipocalin family.

It is found in the secreted. Its function is as follows. May play a role in male fertility. May act as a retinoid carrier protein within the epididymis. The chain is Epididymal-specific lipocalin-10 (LCN10) from Homo sapiens (Human).